A 300-amino-acid polypeptide reads, in one-letter code: Cation-efflux pump FieF (300 aa).

The next 4 membrane-spanning stretches (helical) occupy residues 12-32 (AAIAATAMASLLLLIKIFAWW), 39-59 (ILAALVDSLVDIGASLTNLLV), 82-102 (AALAQSMFISGSALFLFLTGI), and 114-134 (PGVGVIVTIVALICTIILVSF). Positions 45 and 49 each coordinate Zn(2+). Zn(2+) is bound by residues His-153 and Asp-157. A run of 2 helical transmembrane segments spans residues 156–176 (SDVMMNGAILLALGLSWYGWH) and 178–198 (ADALFALGIGIYILYSALRMG).

This sequence belongs to the cation diffusion facilitator (CDF) transporter (TC 2.A.4) family. FieF subfamily. Homodimer.

Its subcellular location is the cell inner membrane. It carries out the reaction Zn(2+)(in) + H(+)(out) = Zn(2+)(out) + H(+)(in). The enzyme catalyses Cd(2+)(in) + H(+)(out) = Cd(2+)(out) + H(+)(in). The catalysed reaction is Fe(2+)(in) + H(+)(out) = Fe(2+)(out) + H(+)(in). Divalent metal cation transporter which exports Zn(2+), Cd(2+) and possibly Fe(2+). May be involved in zinc and iron detoxification by efflux. The sequence is that of Cation-efflux pump FieF from Shigella flexneri serotype 5b (strain 8401).